Here is a 396-residue protein sequence, read N- to C-terminus: Tyrosine--tRNA ligase (396 aa).

A 'HIGH' region motif is present at residues 42–51 (PTAPDIHLGH). The 'KMSKS' region motif lies at 226 to 230 (KMSKS). Lys229 is a binding site for ATP. An S4 RNA-binding domain is found at 334–395 (LPIANLLKEA…GKRKFAKIII (62 aa)).

This sequence belongs to the class-I aminoacyl-tRNA synthetase family. TyrS type 2 subfamily. In terms of assembly, homodimer.

The protein resides in the cytoplasm. The enzyme catalyses tRNA(Tyr) + L-tyrosine + ATP = L-tyrosyl-tRNA(Tyr) + AMP + diphosphate + H(+). Functionally, catalyzes the attachment of tyrosine to tRNA(Tyr) in a two-step reaction: tyrosine is first activated by ATP to form Tyr-AMP and then transferred to the acceptor end of tRNA(Tyr). In Francisella tularensis subsp. tularensis (strain SCHU S4 / Schu 4), this protein is Tyrosine--tRNA ligase.